A 154-amino-acid polypeptide reads, in one-letter code: uncharacterized protein (154 aa).

In terms of domain architecture, HTH marR-type spans arginine 7–aspartate 143. Positions alanine 57 to lysine 80 form a DNA-binding region, H-T-H motif.

This is an uncharacterized protein from Bacillus subtilis (strain 168).